The chain runs to 508 residues: Strychnine-11-hydroxylase (508 aa).

The chain crosses the membrane as a helical span at residues 5–25 (MSFLLLFSLCFLIHCFVFLLI). Cys445 is a heme binding site.

It belongs to the cytochrome P450 family. Heme is required as a cofactor.

It is found in the membrane. It carries out the reaction beta-colubrine + reduced [NADPH--hemoprotein reductase] + O2 = 11-demethylbrucine + oxidized [NADPH--hemoprotein reductase] + H2O + H(+). The protein operates within alkaloid biosynthesis. Functionally, monooxygenase involved in the biosynthesis of curare monoterpene indole alkaloids (MIAs), natural products such as strychnine, a neurotoxic compound used as a pesticide to control rodents, and its pharmacologically active derivatives, including brucine, used to regulate blood pressure. Curare alkaloids act as animal glycine receptor antagonists. Catalyzes the conversion of beta-colubrine to 11-deMe brucine. This chain is Strychnine-11-hydroxylase, found in Strychnos nux-vomica (Poison nut).